The primary structure comprises 359 residues: Peptide chain release factor 1 (359 aa).

Residue glutamine 236 is modified to N5-methylglutamine.

It belongs to the prokaryotic/mitochondrial release factor family. In terms of processing, methylated by PrmC. Methylation increases the termination efficiency of RF1.

Its subcellular location is the cytoplasm. Its function is as follows. Peptide chain release factor 1 directs the termination of translation in response to the peptide chain termination codons UAG and UAA. This chain is Peptide chain release factor 1, found in Streptococcus pyogenes serotype M1.